Here is a 400-residue protein sequence, read N- to C-terminus: MAAASSLHAAPRVGSSSSFSSSSSAGRRSASAARSVRVAAAAGSCAARRAGGRMVARAAVASKAESPASAASSKSDGHEVLLFEALREALIEEMKEDPTVCVFGEDVGHYGGSYKVTKGLAEMFGDLRVLDTPIAENSFTGMGVGAAMKGLRPVVEGMNMGFLLLAYNQISNNCGMLHYTSGGQFKIPIVIRGPGGVGRQLGAEHSQRLESYFQSIPGLQMVACSTPYNAKGLMKAAIRSENPVVLFEHVLLYNLKEKIPDEEYVLCLEEAEMVRPGEHVTILTYSRMRYHVMQAAKTLVNKGYDPEVIDIRSLKPFDLHTIGNSIKKTHRVLIVEECMRTGGIGASLRSAIIDNFWDYLDAPIMCLSSQDVPTPYAAPLEDATVVQPAQIVAAVEQICQ.

The disordered stretch occupies residues Met-1 to Arg-34. The transit peptide at Met-1–Arg-57 directs the protein to the chloroplast. Low complexity predominate over residues Ala-9 to Arg-34. Glu-136 serves as a coordination point for thiamine diphosphate. Residues Ile-189, Ala-237, Ile-238, and Asn-242 each coordinate K(+).

In terms of assembly, tetramer of 2 alpha and 2 beta subunits. It depends on thiamine diphosphate as a cofactor.

It is found in the plastid. The protein localises to the chloroplast. The enzyme catalyses N(6)-[(R)-lipoyl]-L-lysyl-[protein] + pyruvate + H(+) = N(6)-[(R)-S(8)-acetyldihydrolipoyl]-L-lysyl-[protein] + CO2. Its function is as follows. The pyruvate dehydrogenase complex catalyzes the overall conversion of pyruvate to acetyl-CoA and CO(2). It contains multiple copies of three enzymatic components: pyruvate dehydrogenase (E1), dihydrolipoamide acetyltransferase (E2) and lipoamide dehydrogenase (E3). This is Pyruvate dehydrogenase E1 component subunit beta-4, chloroplastic from Oryza sativa subsp. japonica (Rice).